A 240-amino-acid polypeptide reads, in one-letter code: Sugar fermentation stimulation protein homolog (240 aa).

The protein belongs to the SfsA family.

The chain is Sugar fermentation stimulation protein homolog from Methanothermobacter thermautotrophicus (strain ATCC 29096 / DSM 1053 / JCM 10044 / NBRC 100330 / Delta H) (Methanobacterium thermoautotrophicum).